We begin with the raw amino-acid sequence, 1091 residues long: Rho GTPase-activating protein 7 (1091 aa).

Residues 11–78 (LTQIEAKEAC…LNKCAVMKLE (68 aa)) enclose the SAM domain. Phosphoserine occurs at positions 86, 89, and 129. Disordered regions lie at residues 120–181 (SPKQ…TTPR), 296–329 (RSVS…TRSL), 402–439 (RTGS…SSRM), and 491–552 (SDEG…SGVG). Positions 130 to 143 (PDNSRLQSATSRES) are enriched in polar residues. Composition is skewed to low complexity over residues 155–166 (SSIRSLSSTSSS) and 298–324 (VSNS…SPVT). A focal adhesion-targeting (FAT) region spans residues 274–447 (QLNCVEISAL…RMSIYDNVPG (174 aa)). S321 carries the post-translational modification Phosphoserine. The segment covering 414–425 (LRRENSSDSPKE) has biased composition (basic and acidic residues). Positions 499 to 511 (ALDSVSPCPSSPK) are enriched in polar residues. Basic and acidic residues predominate over residues 513-525 (IHLDVDHDRRTPS). Residues 526 to 535 (DLDSTGNSLN) show a composition bias toward polar residues. Residues 614–636 (KHGFSWAVPKFMKRIKVPDYKDR) are polybasic cluster (PBR). One can recognise a Rho-GAP domain in the interval 641–847 (VPLTVNVQRS…HMIAECKKLF (207 aa)). One can recognise an START domain in the interval 877–1084 (SNDQPADYRH…RDSFSNQSTE (208 aa)).

As to quaternary structure, interacts with EF1A1, facilitates EF1A1 distribution to the membrane periphery and ruffles upon growth factor stimulation and suppresses cell migration. Interacts with tensin TNS1 (via N-terminus); the interaction is decreased by phosphorylation of TNS1. Interacts with TNS3 and PTEN; in resting cells, interacts with TNS3 (via C2 tensin-type domain) but, following growth factor stimulation, TNS3 and PTEN are phosphorylated which leads to weakened interaction with TNS3 and enhanced interaction with PTEN. Interacts (via C-terminus) with tensin TNS4 (via SH2 domain); the interaction is independent of tyrosine phosphorylation of DLC1.

Its subcellular location is the cytoplasm. The protein localises to the cell junction. It is found in the focal adhesion. The protein resides in the membrane. In terms of biological role, functions as a GTPase-activating protein for the small GTPases RHOA, RHOB, RHOC and CDC42, terminating their downstream signaling. This induces morphological changes and detachment through cytoskeletal reorganization, playing a critical role in biological processes such as cell migration and proliferation. Also functions in vivo as an activator of the phospholipase PLCD1. Active DLC1 increases cell migration velocity but reduces directionality. Required for growth factor-induced epithelial cell migration; in resting cells, interacts with TNS3 while PTEN interacts with the p85 regulatory subunit of the PI3K kinase complex but growth factor stimulation induces phosphorylation of TNS3 and PTEN, causing them to change their binding preference so that PTEN interacts with DLC1 and TNS3 interacts with p85. The PTEN-DLC1 complex translocates to the posterior of migrating cells to activate RHOA while the TNS3-p85 complex translocates to the leading edge of migrating cells to promote RAC1 activation. The chain is Rho GTPase-activating protein 7 (Dlc1) from Rattus norvegicus (Rat).